The sequence spans 481 residues: tRNA sulfurtransferase (481 aa).

A THUMP domain is found at 54–156 (ADGDGPLRHI…GKDVFFYHEI (103 aa)). ATP-binding positions include 174-175 (LV), Lys-256, Gly-278, and Gln-287. A disulfide bridge connects residues Cys-334 and Cys-433. In terms of domain architecture, Rhodanese spans 388–463 (IPKDAVIIDL…YYSTFSDLKK (76 aa)). The Cysteine persulfide intermediate role is filled by Cys-433.

Belongs to the ThiI family.

Its subcellular location is the cytoplasm. It carries out the reaction [ThiI sulfur-carrier protein]-S-sulfanyl-L-cysteine + a uridine in tRNA + 2 reduced [2Fe-2S]-[ferredoxin] + ATP + H(+) = [ThiI sulfur-carrier protein]-L-cysteine + a 4-thiouridine in tRNA + 2 oxidized [2Fe-2S]-[ferredoxin] + AMP + diphosphate. The catalysed reaction is [ThiS sulfur-carrier protein]-C-terminal Gly-Gly-AMP + S-sulfanyl-L-cysteinyl-[cysteine desulfurase] + AH2 = [ThiS sulfur-carrier protein]-C-terminal-Gly-aminoethanethioate + L-cysteinyl-[cysteine desulfurase] + A + AMP + 2 H(+). It functions in the pathway cofactor biosynthesis; thiamine diphosphate biosynthesis. Functionally, catalyzes the ATP-dependent transfer of a sulfur to tRNA to produce 4-thiouridine in position 8 of tRNAs, which functions as a near-UV photosensor. Also catalyzes the transfer of sulfur to the sulfur carrier protein ThiS, forming ThiS-thiocarboxylate. This is a step in the synthesis of thiazole, in the thiamine biosynthesis pathway. The sulfur is donated as persulfide by IscS. The chain is tRNA sulfurtransferase from Thermoplasma acidophilum (strain ATCC 25905 / DSM 1728 / JCM 9062 / NBRC 15155 / AMRC-C165).